Consider the following 379-residue polypeptide: Forkhead box protein E1 (379 aa).

The span at 1–11 (MTAESQQSPTR) shows a compositional bias: polar residues. Residues 1–65 (MTAESQQSPT…RRRKRPLQKG (65 aa)) are disordered. Positions 54–63 (KGRRRKRPLQ) are enriched in basic residues. Positions 66 to 160 (KPPYSYIALI…DSGSFLRRRK (95 aa)) form a DNA-binding region, fork-head. The interval 239-265 (HSGSEHAQPPNRSISPEVNSTSSSSCN) is disordered. The span at 251 to 265 (SISPEVNSTSSSSCN) shows a compositional bias: low complexity.

As to expression, first expressed at late neural tube and early tailbud stages in the hypophyseal placode. Expression continues in the developing pituitary at late tailbud stages. As development progresses, expressed in the mesoderm of the branchial arches. At stage 38, expressed in the developing thyroid and in the pharyngeal endoderm.

Its subcellular location is the nucleus. Transcription factor that binds consensus sites on a variety of gene promoters and activate their transcription. This is Forkhead box protein E1 from Xenopus laevis (African clawed frog).